A 288-amino-acid polypeptide reads, in one-letter code: Light-independent protochlorophyllide reductase iron-sulfur ATP-binding protein (288 aa).

ATP is bound by residues 10–15 (GIGKST) and lysine 39. Mg(2+) is bound at residue serine 14. [4Fe-4S] cluster contacts are provided by cysteine 95 and cysteine 129. Residues 180–181 (NR) and 204–206 (PLL) contribute to the ATP site.

Belongs to the NifH/BchL/ChlL family. In terms of assembly, homodimer. Protochlorophyllide reductase is composed of three subunits; ChlL, ChlN and ChlB. Requires [4Fe-4S] cluster as cofactor.

It is found in the plastid. The protein localises to the chloroplast. It carries out the reaction chlorophyllide a + oxidized 2[4Fe-4S]-[ferredoxin] + 2 ADP + 2 phosphate = protochlorophyllide a + reduced 2[4Fe-4S]-[ferredoxin] + 2 ATP + 2 H2O. It functions in the pathway porphyrin-containing compound metabolism; chlorophyll biosynthesis (light-independent). In terms of biological role, component of the dark-operative protochlorophyllide reductase (DPOR) that uses Mg-ATP and reduced ferredoxin to reduce ring D of protochlorophyllide (Pchlide) to form chlorophyllide a (Chlide). This reaction is light-independent. The L component serves as a unique electron donor to the NB-component of the complex, and binds Mg-ATP. The protein is Light-independent protochlorophyllide reductase iron-sulfur ATP-binding protein of Stigeoclonium helveticum (Green alga).